We begin with the raw amino-acid sequence, 96 residues long: MAKYEILYIIRPNIEEEAKNALVARFDSILTDNGATVVESKDWEKRRLAYEINDFREGLYHIVNLEATDAAALNEFDRLSKINGDILRHMIVKLDA.

It belongs to the bacterial ribosomal protein bS6 family.

Binds together with bS18 to 16S ribosomal RNA. The sequence is that of Small ribosomal subunit protein bS6 from Streptococcus pyogenes serotype M1.